Consider the following 141-residue polypeptide: Protein C19orf12 homolog (141 aa).

A helical transmembrane segment spans residues Leu-33 to Val-53.

The protein belongs to the C19orf12 family.

The protein resides in the mitochondrion. It is found in the mitochondrion membrane. Its subcellular location is the endoplasmic reticulum. The protein localises to the cytoplasm. It localises to the cytosol. The polypeptide is Protein C19orf12 homolog (Xenopus tropicalis (Western clawed frog)).